The chain runs to 248 residues: Myelin protein P0 (248 aa).

A signal peptide spans 1–29; that stretch reads MAPGAPSSSPSPILAALLFSSLVLSPTLA. One can recognise an Ig-like V-type domain in the interval 30–143; sequence IVVYTDREVY…DIVGKTSQVT (114 aa). Residues 30–153 lie on the Extracellular side of the membrane; that stretch reads IVVYTDREVY…LYVFEKVPTR (124 aa). Cys50 and Cys127 form a disulfide bridge. Residue Asn122 is glycosylated (N-linked (GlcNAc...) (complex) asparagine). Residues 154–179 form a helical membrane-spanning segment; sequence YGVVLGAVIGGILGVVLLLLLLFYLI. The Cytoplasmic segment spans residues 180-248; sequence RYCWLRRQAA…GLGESRKDKK (69 aa). Ser210 carries the phosphoserine; by PKC modification. The disordered stretch occupies residues 222-248; the sequence is MLDHSRSTKAASEKKSKGLGESRKDKK. Residues 224 to 248 are compositionally biased toward basic and acidic residues; the sequence is DHSRSTKAASEKKSKGLGESRKDKK. Phosphoserine is present on residues Ser226 and Ser228. A Phosphoserine; by PKC modification is found at Ser233. Phosphoserine is present on Ser237. Residue Ser243 is modified to Phosphoserine; by PKC.

This sequence belongs to the myelin P0 protein family. In terms of assembly, homodimer and homotetramer. N-glycosylated; contains sulfate-substituted glycan. Found only in peripheral nervous system Schwann cells.

The protein localises to the cell membrane. Its function is as follows. Is an adhesion molecule necessary for normal myelination in the peripheral nervous system. It mediates adhesion between adjacent myelin wraps and ultimately drives myelin compaction. The polypeptide is Myelin protein P0 (Mpz) (Rattus norvegicus (Rat)).